A 314-amino-acid polypeptide reads, in one-letter code: Olfactory receptor 1Q1 (314 aa).

At 1 to 25 (MDNSNWTSVSHFVLLGISTHPEEQI) the chain is on the extracellular side. Asn5 carries an N-linked (GlcNAc...) asparagine glycan. The chain crosses the membrane as a helical span at residues 26 to 49 (PLFLVFSLMYAINISGNLAIITLI). Over 50–57 (LSAPRLHI) the chain is Cytoplasmic. A helical transmembrane segment spans residues 58 to 79 (PMYIFLSNLALTDICFTSTTVP). The Extracellular portion of the chain corresponds to 80–100 (KMLQIIFSPTKVISYTGCLAQ). Cys97 and Cys189 are disulfide-bonded. The chain crosses the membrane as a helical span at residues 101–120 (TYFFICFAVMENFILAVMAY). Residues 121 to 139 (DRYIAICHPFHYTMILTRM) are Cytoplasmic-facing. A helical transmembrane segment spans residues 140–158 (LCVKMVVMCHALSHLHAML). The Extracellular portion of the chain corresponds to 159–195 (HTFLIGQLIFCADNRIPHFFCDLYALMKISCTSTYLN). A helical membrane pass occupies residues 196–219 (TLMIHTEGAVVISGALAFITASYA). Residues 220–236 (CIILVVLRIPSAKGRWK) are Cytoplasmic-facing. The helical transmembrane segment at 237 to 259 (TFSTCGSHLTVVAIFYGTLSWVY) threads the bilayer. Over 260-272 (FRPLSSYSVTKGR) the chain is Extracellular. The chain crosses the membrane as a helical span at residues 273 to 292 (IITVVYTVVTPMLNPFIYSL). Residues 293 to 314 (RNGDVKGGFMKWMSRMQTFFFR) lie on the Cytoplasmic side of the membrane.

Belongs to the G-protein coupled receptor 1 family.

The protein localises to the cell membrane. Odorant receptor. This chain is Olfactory receptor 1Q1 (OR1Q1), found in Homo sapiens (Human).